The chain runs to 565 residues: Periplasmic trehalase (565 aa).

Positions 1-30 are cleaved as a signal peptide; it reads MKSPTPSRPQKMALIPACIFLCFAALSVQA. Substrate contacts are provided by residues Arg152, 159-160, Asn196, 205-207, 277-279, and Gly310; these read WD, RSQ, and RPE. Residues Asp312 and Glu496 each act as proton donor/acceptor in the active site. Residue Glu511 coordinates substrate. The tract at residues 539–565 is disordered; the sequence is CDNVPATRPLSESTTQPLKQKEAEPTP.

Belongs to the glycosyl hydrolase 37 family. As to quaternary structure, monomer.

Its subcellular location is the periplasm. The enzyme catalyses alpha,alpha-trehalose + H2O = alpha-D-glucose + beta-D-glucose. Its function is as follows. Provides the cells with the ability to utilize trehalose at high osmolarity by splitting it into glucose molecules that can subsequently be taken up by the phosphotransferase-mediated uptake system. This Escherichia coli (strain SMS-3-5 / SECEC) protein is Periplasmic trehalase.